Consider the following 122-residue polypeptide: Alkene monooxygenase system, ferredoxin component (122 aa).

The 96-residue stretch at 16–111 (VDVCAVDDLW…LKVEGGRVLI (96 aa)) folds into the Rieske domain. The [2Fe-2S] cluster site is built by cysteine 55, histidine 57, cysteine 75, and histidine 78.

It belongs to the bacterial ring-hydroxylating dioxygenase ferredoxin component family. As to quaternary structure, homodimer. The alkene monooxygenase multicomponent enzyme system is composed of an electron transfer component and a monooxygenase component interacting with the effector protein XamoD. The electron transfer component is composed of a ferredoxin reductase (XamoF) and a ferredoxin (XamoC), and the monooxygenase component is formed by a heterohexamer (dimer of heterotrimers) of two alpha subunits (XamoA), two beta subunits (XamoE) and two gamma subunits (XamoB). It depends on [2Fe-2S] cluster as a cofactor.

Its subcellular location is the cytoplasm. Ferredoxin component of the alkene monooxygenase multicomponent enzyme system which catalyzes the O2- and NADH-dependent epoxidation of short chain (C2 to C6) alkenes to their corresponding epoxides. Functions as an intermediate electron transfer protein. The sequence is that of Alkene monooxygenase system, ferredoxin component from Xanthobacter autotrophicus (strain ATCC BAA-1158 / Py2).